The following is a 417-amino-acid chain: Serine hydroxymethyltransferase (417 aa).

(6S)-5,6,7,8-tetrahydrofolate is bound by residues Leu121 and 125-127 (GHL). Lys229 carries the post-translational modification N6-(pyridoxal phosphate)lysine. Position 355–357 (355–357 (SPF)) interacts with (6S)-5,6,7,8-tetrahydrofolate.

This sequence belongs to the SHMT family. In terms of assembly, homodimer. The cofactor is pyridoxal 5'-phosphate.

It is found in the cytoplasm. The enzyme catalyses (6R)-5,10-methylene-5,6,7,8-tetrahydrofolate + glycine + H2O = (6S)-5,6,7,8-tetrahydrofolate + L-serine. Its pathway is one-carbon metabolism; tetrahydrofolate interconversion. It participates in amino-acid biosynthesis; glycine biosynthesis; glycine from L-serine: step 1/1. Its function is as follows. Catalyzes the reversible interconversion of serine and glycine with tetrahydrofolate (THF) serving as the one-carbon carrier. This reaction serves as the major source of one-carbon groups required for the biosynthesis of purines, thymidylate, methionine, and other important biomolecules. Also exhibits THF-independent aldolase activity toward beta-hydroxyamino acids, producing glycine and aldehydes, via a retro-aldol mechanism. This is Serine hydroxymethyltransferase from Klebsiella pneumoniae subsp. pneumoniae (strain ATCC 700721 / MGH 78578).